An 87-amino-acid chain; its full sequence is Large ribosomal subunit protein bL27 (87 aa).

The disordered stretch occupies residues 1-21 (MAHKKGGGSTRNGRDSASKRL).

This sequence belongs to the bacterial ribosomal protein bL27 family.

This Amoebophilus asiaticus (strain 5a2) protein is Large ribosomal subunit protein bL27.